The chain runs to 173 residues: ATP synthase subunit b (173 aa).

The chain crosses the membrane as a helical span at residues 12–34 (AFGNLYAIGWSAVNFLVLLALMY).

The protein belongs to the ATPase B chain family. F-type ATPases have 2 components, F(1) - the catalytic core - and F(0) - the membrane proton channel. F(1) has five subunits: alpha(3), beta(3), gamma(1), delta(1), epsilon(1). F(0) has three main subunits: a(1), b(2) and c(10-14). The alpha and beta chains form an alternating ring which encloses part of the gamma chain. F(1) is attached to F(0) by a central stalk formed by the gamma and epsilon chains, while a peripheral stalk is formed by the delta and b chains.

The protein resides in the cell membrane. In terms of biological role, f(1)F(0) ATP synthase produces ATP from ADP in the presence of a proton or sodium gradient. F-type ATPases consist of two structural domains, F(1) containing the extramembraneous catalytic core and F(0) containing the membrane proton channel, linked together by a central stalk and a peripheral stalk. During catalysis, ATP synthesis in the catalytic domain of F(1) is coupled via a rotary mechanism of the central stalk subunits to proton translocation. Component of the F(0) channel, it forms part of the peripheral stalk, linking F(1) to F(0). This chain is ATP synthase subunit b, found in Syntrophomonas wolfei subsp. wolfei (strain DSM 2245B / Goettingen).